Here is a 279-residue protein sequence, read N- to C-terminus: MIHFTKMHGLGNDFMVVDGVTQNVYFSPEQIKRLADRNFGIGFDQLLLVEPPYDPDLDFHYRIFNADGSEVEQCGNGARCFARFVKSKGLINKQKIKVSTSSGKMTLRLERDGSVTVNMGIPVLEPSRIPFNAKKAEKTYLLQADMPEGMQTFLCGAVSMGNPHCVLEVDDVANADVERIGSLLTKHERFPKGVNVGFMQVVDANHIKLRVYERGAAETLACGSGACAAVAVGQLQGKLARRVRVDLPGGSLTINWEGEGKPLWMTGPAEHVYDGQIQQ.

Asn-12, Gln-45, and Asn-65 together coordinate substrate. The active-site Proton donor is the Cys-74. Residues Gly-75–Asn-76, Asn-162, Asn-195, and Glu-213–Arg-214 contribute to the substrate site. The Proton acceptor role is filled by Cys-222. Gly-223–Ser-224 provides a ligand contact to substrate.

It belongs to the diaminopimelate epimerase family. As to quaternary structure, homodimer.

It localises to the cytoplasm. It carries out the reaction (2S,6S)-2,6-diaminopimelate = meso-2,6-diaminopimelate. It participates in amino-acid biosynthesis; L-lysine biosynthesis via DAP pathway; DL-2,6-diaminopimelate from LL-2,6-diaminopimelate: step 1/1. Functionally, catalyzes the stereoinversion of LL-2,6-diaminopimelate (L,L-DAP) to meso-diaminopimelate (meso-DAP), a precursor of L-lysine and an essential component of the bacterial peptidoglycan. The chain is Diaminopimelate epimerase from Shewanella loihica (strain ATCC BAA-1088 / PV-4).